Reading from the N-terminus, the 283-residue chain is Cyclin-C (283 aa).

The 99-residue stretch at Asn-46–Glu-144 folds into the Cyclin N-terminal domain. A disordered region spans residues Thr-252–Ser-283. The segment covering Glu-267–Ser-283 has biased composition (polar residues).

It belongs to the cyclin family. Cyclin C subfamily. As to quaternary structure, component of the Mediator complex. The cylin/CDK pair formed by ccnc/cdk8 also associates with the large subunit of RNA polymerase II.

Its subcellular location is the nucleus. Component of the Mediator complex, a coactivator involved in regulated gene transcription of nearly all RNA polymerase II-dependent genes. Mediator functions as a bridge to convey information from gene-specific regulatory proteins to the basal RNA polymerase II transcription machinery. Mediator is recruited to promoters by direct interactions with regulatory proteins and serves as a scaffold for the assembly of a functional preinitiation complex with RNA polymerase II and the general transcription factors. Binds to and activates cyclin-dependent kinase cdk8 that phosphorylates the CTD (C-terminal domain) of the large subunit of RNA polymerase II (RNAp II), which may inhibit the formation of a transcription initiation complex. The polypeptide is Cyclin-C (ccnc) (Xenopus tropicalis (Western clawed frog)).